The following is a 212-amino-acid chain: MSQNTIHKIAVKKRTTTGKNENNRLRSSGMVPVNIIGGGVATSGAVNEKELEKMVHSGIRQSTLIELDVEGQGAQKVFVKEIQRFPEIDRIRHVDFYKVVPGQKIVTKIGIETTGIAKGSKTGGQFEHIIHEIRVKTIPEDLLENLTIDVTDLDVGDSIKISQLKVPTSWEILINGDPIVTSVNKTKALLAAERAEAKGSAADDAKAKKGKK.

The protein belongs to the bacterial ribosomal protein bL25 family. CTC subfamily. In terms of assembly, part of the 50S ribosomal subunit; part of the 5S rRNA/L5/L18/L25 subcomplex. Contacts the 5S rRNA. Binds to the 5S rRNA independently of L5 and L18.

Functionally, this is one of the proteins that binds to the 5S RNA in the ribosome where it forms part of the central protuberance. This Leptospira interrogans serogroup Icterohaemorrhagiae serovar copenhageni (strain Fiocruz L1-130) protein is Large ribosomal subunit protein bL25.